A 205-amino-acid chain; its full sequence is Protease (205 aa).

Active-site residues include His-54, Asp-71, and Cys-122.

It belongs to the peptidase C5 family. As to quaternary structure, interacts with protease cofactor pVI-C; this interaction is necessary for protease activation.

Its subcellular location is the virion. It localises to the host nucleus. It carries out the reaction Cleaves proteins of the adenovirus and its host cell at two consensus sites: -Yaa-Xaa-Gly-Gly-|-Xaa- and -Yaa-Xaa-Gly-Xaa-|-Gly- (in which Yaa is Met, Ile or Leu, and Xaa is any amino acid).. With respect to regulation, requires DNA and protease cofactor for maximal activation. Inside nascent virions, becomes partially activated by binding to the viral DNA, allowing it to cleave the cofactor that binds to the protease and fully activates it. Actin, like the viral protease cofactor, seems to act as a cofactor in the cleavage of cytokeratin 18 and of actin itself. Functionally, cleaves viral precursor proteins (pTP, pIIIa, pVI, pVII, pVIII, and pX) inside newly assembled particles giving rise to mature virions. Protease complexed to its cofactor slides along the viral DNA to specifically locate and cleave the viral precursors. Mature virions have a weakened organization compared to the unmature virions, thereby facilitating subsequent uncoating. Without maturation, the particle lacks infectivity and is unable to uncoat. Late in adenovirus infection, in the cytoplasm, may participate in the cytoskeleton destruction. Cleaves host cell cytoskeletal keratins K7 and K18. The polypeptide is Protease (Homo sapiens (Human)).